The following is a 191-amino-acid chain: Glutathione-independent glyoxalase DJ-1 (191 aa).

Catalysis depends on residues glutamate 16, cysteine 111, and histidine 130.

It belongs to the peptidase C56 family.

It localises to the cytoplasm. The protein localises to the nucleus. The enzyme catalyses methylglyoxal + H2O = (R)-lactate + H(+). Catalyzes the conversion of methylglyoxal (MG) to D-lactate in a single glutathione (GSH)-independent step. May play a role in detoxifying endogenously produced glyoxals. Involved in protection against reactive oxygen species (ROS). The polypeptide is Glutathione-independent glyoxalase DJ-1 (Schizosaccharomyces pombe (strain 972 / ATCC 24843) (Fission yeast)).